A 79-amino-acid polypeptide reads, in one-letter code: Orally active insecticidal peptide (79 aa).

The first 19 residues, 1–19 (MRVLFIIAGLALLSVVCYT), serve as a signal peptide directing secretion. The propeptide occupies 20-44 (SEMKERSSFNEVLSEFFAADEPQER). 3 cysteine pairs are disulfide-bonded: Cys-46/Cys-61, Cys-53/Cys-66, and Cys-60/Cys-73. Position 77 is an alanine amide (Ala-77).

Belongs to the neurotoxin 03 (Tx2) family. 01 subfamily. Expressed by the venom gland.

It localises to the secreted. In terms of biological role, probable ion channel inhibitor. Shows insecticidal activity when injected into mealworms. The protein is Orally active insecticidal peptide of Selenotypus plumipes (Australian featherleg tarantula).